The primary structure comprises 538 residues: Sterol esterase 2 (538 aa).

At 1-11 (MVNKVVDEVQR) the chain is on the cytoplasmic side. The helical; Signal-anchor for type II membrane protein transmembrane segment at 12-32 (LVSAIILTSFMTGLFILSLWK) threads the bilayer. Residues 33-538 (NYVTVHFQHK…IENLRFPNAR (506 aa)) are Lumenal-facing. Positions 42 to 87 (KNDPRDTRSSRTKIQPNDKKKKRPARHSRPLSISSTTPLDLQRDQE) are disordered. Positions 60-70 (KKKKRPARHSR) are enriched in basic residues. A phosphoserine mark is found at S73 and S107. S287 (nucleophile) is an active-site residue. Active-site charge relay system residues include D480 and H511.

The protein belongs to the AB hydrolase superfamily. Not glycosylated.

Its subcellular location is the cell membrane. It carries out the reaction a sterol ester + H2O = a sterol + a fatty acid + H(+). Functionally, mediates the hydrolysis of steryl esters. Required for mobilization of steryl ester, thereby playing a central role in lipid metabolism. The polypeptide is Sterol esterase 2 (YEH2) (Saccharomyces cerevisiae (strain ATCC 204508 / S288c) (Baker's yeast)).